We begin with the raw amino-acid sequence, 159 residues long: Dihydrofolate reductase (159 aa).

The DHFR domain occupies 1–158; the sequence is MISLIAALAV…HSYCFEILER (158 aa). A substrate-binding site is contributed by isoleucine 5. Residues alanine 7 and 13-19 each bind NADP(+); that span reads VIGMENA. Position 27 (aspartate 27) interacts with substrate. 45 to 46 contributes to the NADP(+) binding site; it reads LT. The substrate site is built by arginine 52 and arginine 57. NADP(+) is bound by residues 63-64, lysine 76, and 95-102; these read SS and GGGRVYEQ. Threonine 113 lines the substrate pocket.

Belongs to the dihydrofolate reductase family.

The enzyme catalyses (6S)-5,6,7,8-tetrahydrofolate + NADP(+) = 7,8-dihydrofolate + NADPH + H(+). Its pathway is cofactor biosynthesis; tetrahydrofolate biosynthesis; 5,6,7,8-tetrahydrofolate from 7,8-dihydrofolate: step 1/1. Key enzyme in folate metabolism. Catalyzes an essential reaction for de novo glycine and purine synthesis, and for DNA precursor synthesis. This Klebsiella aerogenes (Enterobacter aerogenes) protein is Dihydrofolate reductase (folA).